A 161-amino-acid chain; its full sequence is UPF0178 protein BOV_1904 (161 aa).

It belongs to the UPF0178 family.

This is UPF0178 protein BOV_1904 from Brucella ovis (strain ATCC 25840 / 63/290 / NCTC 10512).